The following is a 156-amino-acid chain: Small ribosomal subunit protein uS7 (156 aa).

It belongs to the universal ribosomal protein uS7 family. As to quaternary structure, part of the 30S ribosomal subunit. Contacts proteins S9 and S11.

Functionally, one of the primary rRNA binding proteins, it binds directly to 16S rRNA where it nucleates assembly of the head domain of the 30S subunit. Is located at the subunit interface close to the decoding center, probably blocks exit of the E-site tRNA. The protein is Small ribosomal subunit protein uS7 of Carsonella ruddii (strain PV).